The chain runs to 1007 residues: Glutamate receptor ionotropic, delta-2 (1007 aa).

The signal sequence occupies residues 1–23 (MEVFPLLFFLSFWWSRTWDLATS). Positions 24–345 (DSIIHIGAIF…NAFHKKLEDR (322 aa)) are interaction with CBLN1 homotrimer. The Extracellular segment spans residues 24 to 566 (DSIIHIGAIF…DMFACLAPFD (543 aa)). 3 cysteine pairs are disulfide-bonded: Cys83-Cys355, Cys99-Cys131, and Cys298-Cys310. A glycan (N-linked (GlcNAc...) asparagine) is linked at Asn293. The N-linked (GlcNAc...) asparagine glycan is linked to Asn426. Residues 567 to 587 (LSLWACIAGTVLLVGLLVYLL) traverse the membrane as a helical segment. The Cytoplasmic portion of the chain corresponds to 588-635 (NWLNPPRLQMGSMTSTTLYNSMWFVYGSFVQQGGEVPYTTLATRMMMG). A helical transmembrane segment spans residues 636-656 (AWWLFALIVISSYTANLAAFL). The Extracellular portion of the chain corresponds to 657–830 (TITRIESSIQ…QKGGALDIKS (174 aa)). N-linked (GlcNAc...) asparagine glycosylation is found at Asn713 and Asn716. Residues 831–851 (LAGVFCILAAGIVLSCLIAVL) form a helical membrane-spanning segment. Over 852–1007 (ETWWSRRKGS…GNDPDRGTSI (156 aa)) the chain is Cytoplasmic. Residue Ser883 is modified to Phosphoserine. Residue Thr886 is modified to Phosphothreonine. Residue Ser890 is modified to Phosphoserine. The interval 921-991 (DFRNTHITTT…MSSIPYQPTP (71 aa)) is interaction with AP4M1. Positions 1005–1007 (TSI) match the PDZ-binding motif. A Phosphoserine modification is found at Ser1006.

It belongs to the glutamate-gated ion channel (TC 1.A.10.1) family. GRID2 subfamily. Tetramer; dimer of dimers. Interacts with AP4M1. Interacts with EML2. Interacts with MAGI2 (via PDZ domains). Interacts with BECN1, GOPC, GRID2IP, SHANK1 and SHANK2. Interacts with CBLN2, but not with CBLN4. Interacts with CBLN1 (via C1q domain); the interaction is CBLN1-NRX1 complex formation-dependent; CBLN1-binding is calcium-independent; CBLN1 hexamers anchor GRID2 N-terminal domain dimers to monomeric NRXN1 isoform beta; promotes synaptogenesis and mediates the D-Serine-dependent long term depression signals and AMPA receptor endocytosis. As to expression, expressed at high levels in the cerebellar Purkinje cell layer, almost absent in the forebrain.

It localises to the postsynaptic cell membrane. It carries out the reaction Ca(2+)(in) = Ca(2+)(out). The catalysed reaction is Na(+)(in) = Na(+)(out). Member of the ionotropic glutamate receptor family, which plays a crucial role in synaptic organization and signal transduction in the central nervous system. Although it shares structural features with ionotropic glutamate receptors, does not bind glutamate as a primary ligand. Promotes synaptogenesis and mediates the D-Serine-dependent long term depression signals and AMPA receptor endocytosis of cerebellar parallel fiber-Purkinje cell (PF-PC) synapses through the NRX1B-CBLN1-GRID2 triad complex. In the presence of neurexins and cerebellins, forms cation-selective channels that are proposed to be gated by glycine and D-serine. However, recent research disputes this ligand-gated cation channel activity. Cation-selective ion channel activity can be triggered by GRM1 in Purkinje cells. The chain is Glutamate receptor ionotropic, delta-2 (Grid2) from Rattus norvegicus (Rat).